The primary structure comprises 352 residues: Putative [LysW]-L-2-aminoadipate/[LysW]-L-glutamate phosphate reductase (352 aa).

Residues 10-13 and 34-36 contribute to the NADP(+) site; these read SGFT and SRK. Residue Cys151 is part of the active site. Asn319 serves as a coordination point for NADP(+).

It belongs to the NAGSA dehydrogenase family. Type 1 subfamily. LysY sub-subfamily.

Its subcellular location is the cytoplasm. It carries out the reaction [amino-group carrier protein]-C-terminal-N-(1-carboxy-5-oxopentan-1-yl)-L-glutamine + phosphate + NADP(+) = [amino-group carrier protein]-C-terminal-N-(1-carboxy-5-phosphooxy-5-oxopentan-1-yl)-L-glutamine + NADPH + H(+). The catalysed reaction is [amino-group carrier protein]-C-terminal-gamma-(L-glutamyl-5-semialdehyde)-L-glutamate + phosphate + NADP(+) = [amino-group carrier protein]-C-terminal-gamma-(5-phospho-L-glutamyl)-L-glutamate + NADPH + H(+). The protein operates within amino-acid biosynthesis; L-lysine biosynthesis via AAA pathway; L-lysine from L-alpha-aminoadipate (Thermus route): step 3/5. It participates in amino-acid biosynthesis; L-arginine biosynthesis. Its function is as follows. Involved in both the arginine and lysine biosynthetic pathways. This chain is Putative [LysW]-L-2-aminoadipate/[LysW]-L-glutamate phosphate reductase, found in Pyrobaculum neutrophilum (strain DSM 2338 / JCM 9278 / NBRC 100436 / V24Sta) (Thermoproteus neutrophilus).